A 191-amino-acid chain; its full sequence is Transcriptional activator GvpE1 (191 aa).

Positions serine 31–threonine 51 are disordered. Residue lysine 140–arginine 145 coordinates DNA. A leucine-zipper region spans residues glutamate 150–glutamine 181.

Interacts with GvpD.

Its subcellular location is the cytoplasm. The amount of protein that accumulates is controlled by GvpD; GvpD causes a reduction in the amount of GvpE, preventing accumulation of excessive amounts of gas vesicles. Plays a regulatory role in gas vesicle synthesis, activates transcription of the gvpA operon, and probably of the gvpD operon. Gas vesicles are hollow, gas filled proteinaceous nanostructures found in several microbial planktonic microorganisms. They allow positioning of halobacteria at the optimal depth for growth in the poorly aerated, shallow brine pools of their habitat. In terms of biological role, expression of a 9.5 kb p-vac DNA fragment containing 2 divergently transcribed regions (gvpD-gvpE-gvpF-gvpG-gvpH-gvpI-gvpJ-gvpK-gvpL-gvpM and gvpA-gvpC-gvpN-gvpO) allows H.volcanii to produce gas vesicles. A similar region restores gas vesicle production in H.halobium without the p-vac locus, but it still has the c-vac locus. The sequence is that of Transcriptional activator GvpE1 (gvpE11) from Halobacterium salinarum (strain ATCC 700922 / JCM 11081 / NRC-1) (Halobacterium halobium).